Here is a 796-residue protein sequence, read N- to C-terminus: Vacuolar protein sorting-associated protein 35 (796 aa).

Phosphoserine is present on Ser-7. Interaction with SNX3 stretches follow at residues 25 to 44 (VQSF…DALK) and 205 to 215 (DREKRERERQE). The interval 438-796 (CYVLSNVLDY…EGPIYEGLIL (359 aa)) is interaction with SLC11A2. The tract at residues 500–693 (SEDPDQQYLI…DKNGEELHGG (194 aa)) is interaction with IGF2R cytoplasmic domain. Ser-783 carries the phosphoserine modification. The residue at position 791 (Tyr-791) is a Phosphotyrosine.

This sequence belongs to the VPS35 family. Component of the heterotrimeric retromer cargo-selective complex (CSC), also decribed as vacuolar protein sorting subcomplex (VPS), formed by VPS26 (VPS26A or VPS26B), VPS29 and VPS35. The CSC has a highly elongated structure with VPS26 and VPS29 binding independently at opposite distal ends of VPS35 as central platform. The CSC is believed to associate with variable sorting nexins to form functionally distinct retromer complex variants. The originally described retromer complex (also called SNX-BAR retromer) is a pentamer containing the CSC and a heterodimeric membrane-deforming subcomplex formed between SNX1 or SNX2 and SNX5 or SNX6 (also called SNX-BAR subcomplex); the respective CSC and SNX-BAR subcomplexes associate with low affinity. The CSC associates with SNX3 to form a SNX3-retromer complex. The CSC associates with SNX27, the WASH complex and the SNX-BAR subcomplex to form the SNX27-retromer complex. Interacts with VPS26A, VPS26B, VPS29, SNX1, SNX2, IGF2R, SNX3, GOLPH3, LRRK2, SLC11A2, WASHC2A, WASHC2C, FKBP15, WASHC1, RAB7A, SNX27, WASHC5, EHD1. Interacts with MAGEL2; leading to recruitment of the TRIM27:MAGEL2 E3 ubiquitin ligase complex retromer-containing endosomes. Interacts with SORCS2. In terms of assembly, (Microbial infection) Interacts with human papillomavirus 16 minor capsid protein L2 (via C-terminus); this interaction mediates the transport of the capsid from the early endosome to the Golgi apparatus. In terms of tissue distribution, ubiquitous. Highly expressed in heart, brain, placenta, skeletal muscle, spleen, thymus, testis, ovary, small intestine, kidney and colon.

It localises to the cytoplasm. The protein resides in the membrane. It is found in the endosome. The protein localises to the early endosome. Its subcellular location is the late endosome. Acts as a component of the retromer cargo-selective complex (CSC). The CSC is believed to be the core functional component of retromer or respective retromer complex variants acting to prevent missorting of selected transmembrane cargo proteins into the lysosomal degradation pathway. The recruitment of the CSC to the endosomal membrane involves RAB7A and SNX3. The CSC seems to associate with the cytoplasmic domain of cargo proteins predominantly via VPS35; however, these interactions seem to be of low affinity and retromer SNX proteins may also contribute to cargo selectivity thus questioning the classical function of the CSC. The SNX-BAR retromer mediates retrograde transport of cargo proteins from endosomes to the trans-Golgi network (TGN) and is involved in endosome-to-plasma membrane transport for cargo protein recycling. The SNX3-retromer mediates the retrograde endosome-to-TGN transport of WLS distinct from the SNX-BAR retromer pathway. The SNX27-retromer is believed to be involved in endosome-to-plasma membrane trafficking and recycling of a broad spectrum of cargo proteins. The CSC seems to act as recruitment hub for other proteins, such as the WASH complex and TBC1D5. Required for retrograde transport of lysosomal enzyme receptor IGF2R and SLC11A2. Required to regulate transcytosis of the polymeric immunoglobulin receptor (pIgR-pIgA). Required for endosomal localization of WASHC2C. Mediates the association of the CSC with the WASH complex via WASHC2. Required for the endosomal localization of TBC1D5. Its function is as follows. (Microbial infection) The heterotrimeric retromer cargo-selective complex (CSC) mediates the exit of human papillomavirus from the early endosome and the delivery to the Golgi apparatus. The chain is Vacuolar protein sorting-associated protein 35 from Homo sapiens (Human).